Consider the following 154-residue polypeptide: Ribonuclease H (154 aa).

One can recognise an RNase H type-1 domain in the interval 1–142 (MEKTVEIYTD…VDDLARDAAG (142 aa)). Mg(2+) is bound by residues Asp10, Glu48, Asp70, and Asp134.

It belongs to the RNase H family. Monomer. It depends on Mg(2+) as a cofactor.

Its subcellular location is the cytoplasm. The enzyme catalyses Endonucleolytic cleavage to 5'-phosphomonoester.. Endonuclease that specifically degrades the RNA of RNA-DNA hybrids. The chain is Ribonuclease H from Pseudoalteromonas translucida (strain TAC 125).